Here is a 353-residue protein sequence, read N- to C-terminus: Sesquiterpene synthase Agr8 (353 aa).

Asp-82, Asn-220, Ser-224, and Glu-228 together coordinate Mg(2+). The short motif at 82–86 is the DDXXD motif element; that stretch reads DEYTD. 2 residues coordinate (2E,6E)-farnesyl diphosphate: Arg-309 and Tyr-310.

It belongs to the terpene synthase family. It depends on Mg(2+) as a cofactor.

The enzyme catalyses (2E,6E)-farnesyl diphosphate = gamma-muurolene + diphosphate. It catalyses the reaction (2E,6E)-farnesyl diphosphate = alpha-selinene + diphosphate. It carries out the reaction (2E,6E)-farnesyl diphosphate = delta-cadinene + diphosphate. In terms of biological role, terpene cyclase that catalyzes the cyclization of farnesyl diphosphate (FPP) to various sesquiterpenes, including beta-elemene, gamma-muurolene, alpha-selinene, beta-selinene, beta-cadinene, delta-cadinene and alpha-cadinol. This is Sesquiterpene synthase Agr8 from Cyclocybe aegerita (Black poplar mushroom).